The sequence spans 91 residues: Hepcidin-2 (91 aa).

An N-terminal signal peptide occupies residues 1–24 (MKLSNVFLAAVVILTCVCVFQITA). A propeptide spanning residues 25-64 (VPFIQQVQDEHHVESEELQENQHLTEAEHRLTDPLVLFRT) is cleaved from the precursor. Intrachain disulfides connect C73/C89, C76/C79, C77/C85, and C80/C88.

This sequence belongs to the hepcidin family.

The protein localises to the secreted. Functionally, seems to act as a signaling molecule involved in the maintenance of iron homeostasis. Seems to be required in conjunction with HFE to regulate both intestinal iron absorption and iron storage in macrophages. May also have antimicrobial activity. This chain is Hepcidin-2 (hamp2), found in Danio rerio (Zebrafish).